Consider the following 515-residue polypeptide: N-fatty-acyl-amino acid synthase/hydrolase PM20D1.1 (515 aa).

The first 34 residues, 1-34, serve as a signal peptide directing secretion; sequence MKTKFTKKTVLKFFGILFAILLLSVLILFSVVIG. Residues asparagine 50, asparagine 87, and asparagine 118 are each glycosylated (N-linked (GlcNAc...) asparagine). Residue histidine 140 participates in Zn(2+) binding. Residue aspartate 142 is part of the active site. Aspartate 173 lines the Zn(2+) pocket. The active-site Proton acceptor is glutamate 207. Zn(2+) is bound by residues glutamate 208, aspartate 234, and histidine 480.

It belongs to the peptidase M20A family. Zn(2+) is required as a cofactor.

It is found in the secreted. It catalyses the reaction an N-acyl-L-amino acid + H2O = an L-alpha-amino acid + a carboxylate. The enzyme catalyses an N-acyl-aromatic L-alpha-amino acid + H2O = an aromatic L-alpha-amino acid + a carboxylate. The catalysed reaction is N-(5Z,8Z,11Z,14Z)-eicosatetraenoyl-glycine + H2O = (5Z,8Z,11Z,14Z)-eicosatetraenoate + glycine. It carries out the reaction N-hexadecanoyl-L-phenylalanine + H2O = hexadecanoate + L-phenylalanine. It catalyses the reaction N-octadecanoyl-L-phenylalanine + H2O = octadecanoate + L-phenylalanine. The enzyme catalyses N-(4Z,7Z,10Z,13Z,16Z,19Z-docosahexaenoyl)-L-phenylalanine + H2O = (4Z,7Z,10Z,13Z,16Z,19Z)-docosahexaenoate + L-phenylalanine. The catalysed reaction is N-(9Z-octadecenoyl)-L-asparagine + H2O = L-asparagine + (9Z)-octadecenoate. It carries out the reaction (9Z)-octadecenoate + glycine = N-(9Z-octadecenoyl)glycine + H2O. It catalyses the reaction N-(9Z-octadecenoyl)-L-lysine + H2O = L-lysine + (9Z)-octadecenoate. The enzyme catalyses N-(9Z-octadecenoyl)-L-methionine + H2O = (9Z)-octadecenoate + L-methionine. The catalysed reaction is N-(9Z-octadecenoyl)-L-serine + H2O = L-serine + (9Z)-octadecenoate. It carries out the reaction N-(9Z-octadecenoyl)-L-tryptophan + H2O = L-tryptophan + (9Z)-octadecenoate. It catalyses the reaction N-(9Z-octadecenoyl)-L-tyrosine + H2O = L-tyrosine + (9Z)-octadecenoate. The enzyme catalyses N-(9Z-octadecenoyl)-L-glutamine + H2O = L-glutamine + (9Z)-octadecenoate. The catalysed reaction is N-(5Z,8Z,11Z,14Z-eicosatetraenoyl)-L-serine + H2O = (5Z,8Z,11Z,14Z)-eicosatetraenoate + L-serine. It carries out the reaction (5Z,8Z,11Z,14Z)-eicosatetraenoate + L-phenylalanine = N-(5Z,8Z,11Z,14Z-eicosatetraenoyl)-L-phenylalanine + H2O. It catalyses the reaction N-(9Z-octadecenoyl)-L-leucine + H2O = L-leucine + (9Z)-octadecenoate. The enzyme catalyses L-phenylalanine + (9Z)-octadecenoate = N-(9Z-octadecenoyl)-L-phenylalanine + H2O. It functions in the pathway amino-acid metabolism. It participates in energy metabolism; electron transfer. Its pathway is lipid metabolism; fatty acid metabolism. Its activity is regulated as follows. Lipoproteins are powerful coactivators of PM20D1 activity in vitro and NAA biosynthesis in vivo. In terms of biological role, secreted enzyme that regulates the endogenous N-fatty acyl amino acid (NAAs) tissue and circulating levels by functioning as a bidirectional NAA synthase/hydrolase. It condenses free fatty acids and free amino acids to generate NAAs and bidirectionally catalyzes the reverse hydrolysis reaction. Some of these NAAs stimulate oxidative metabolism via mitochondrial uncoupling, increasing energy expenditure in a UPC1-independent manner. Thereby, this secreted protein may indirectly regulate whole body energy expenditure. PM20D1 circulates in tight association with both low- and high-density (LDL and HDL,respectively) lipoprotein particles. In Danio rerio (Zebrafish), this protein is N-fatty-acyl-amino acid synthase/hydrolase PM20D1.1.